Here is a 365-residue protein sequence, read N- to C-terminus: Probable caffeine synthase 4 (365 aa).

Tyr18 contributes to the S-adenosyl-L-homocysteine binding site. Thr25 contributes to the caffeine binding site. Cys61, Asn66, Asp98, Leu99, Ser134, and Phe135 together coordinate S-adenosyl-L-homocysteine. Residues Tyr152, His155, and Trp156 each contribute to the caffeine site. 4 residues coordinate Mg(2+): Asn173, Asp259, Phe261, and Asn262. Phe317 contributes to the caffeine binding site.

It belongs to the methyltransferase superfamily. Type-7 methyltransferase family. The cofactor is Mg(2+).

The protein operates within alkaloid biosynthesis. May be involved in the biosynthesis of caffeine. This is Probable caffeine synthase 4 from Camellia sinensis (Tea plant).